We begin with the raw amino-acid sequence, 101 residues long: Large ribosomal subunit protein eL31 (101 aa).

Belongs to the eukaryotic ribosomal protein eL31 family.

This chain is Large ribosomal subunit protein eL31, found in Ignicoccus hospitalis (strain KIN4/I / DSM 18386 / JCM 14125).